A 228-amino-acid chain; its full sequence is Ribonuclease 3 (228 aa).

One can recognise an RNase III domain in the interval 7–136 (LNKLKNEYNI…FNGALFLDQG (130 aa)). Glu49 is a Mg(2+) binding site. Asp53 is a catalytic residue. Mg(2+) is bound by residues Asp122 and Glu125. Residue Glu125 is part of the active site. Positions 162–228 (DYKTDLQELL…AAKAALQKFE (67 aa)) constitute a DRBM domain. The tract at residues 207 to 228 (GEGHNKKAAEQQAAKAALQKFE) is disordered. Positions 216 to 228 (EQQAAKAALQKFE) are enriched in low complexity.

It belongs to the ribonuclease III family. In terms of assembly, homodimer. The cofactor is Mg(2+).

It localises to the cytoplasm. The catalysed reaction is Endonucleolytic cleavage to 5'-phosphomonoester.. In terms of biological role, digests double-stranded RNA. Involved in the processing of primary rRNA transcript to yield the immediate precursors to the large and small rRNAs (23S and 16S). Processes some mRNAs, and tRNAs when they are encoded in the rRNA operon. Processes pre-crRNA and tracrRNA of type II CRISPR loci if present in the organism. This chain is Ribonuclease 3, found in Lactobacillus acidophilus (strain ATCC 700396 / NCK56 / N2 / NCFM).